Consider the following 524-residue polypeptide: Probable metalloreductase AIM14 (524 aa).

7 helical membrane passes run 24-44 (VNIK…VLSI), 69-89 (SIPF…LSIF), 104-121 (RLGR…FISL), 143-163 (WISR…LYKW), 179-199 (FLGV…VNVM), 206-226 (LFYI…AFHA), and 230-250 (VPLL…QRFF). In terms of domain architecture, Ferric oxidoreductase spans 105–222 (LGRMAYCLVP…VTLWMFVVLI (118 aa)). The FAD-binding FR-type domain maps to 248 to 372 (RFFKSYYLHD…GGSGISFGLP (125 aa)).

The protein belongs to the ferric reductase (FRE) family. AIM14 subfamily.

The protein localises to the membrane. In terms of biological role, probable cell surface metalloreductase. May be involved in iron or copper homeostasis. In Scheffersomyces stipitis (strain ATCC 58785 / CBS 6054 / NBRC 10063 / NRRL Y-11545) (Yeast), this protein is Probable metalloreductase AIM14 (AIM14).